Reading from the N-terminus, the 491-residue chain is Probable cytosol aminopeptidase (491 aa).

2 residues coordinate Mn(2+): Lys261 and Asp266. Lys273 is an active-site residue. Positions 284, 343, and 345 each coordinate Mn(2+). Residue Arg347 is part of the active site.

It belongs to the peptidase M17 family. It depends on Mn(2+) as a cofactor.

It is found in the cytoplasm. The enzyme catalyses Release of an N-terminal amino acid, Xaa-|-Yaa-, in which Xaa is preferably Leu, but may be other amino acids including Pro although not Arg or Lys, and Yaa may be Pro. Amino acid amides and methyl esters are also readily hydrolyzed, but rates on arylamides are exceedingly low.. The catalysed reaction is Release of an N-terminal amino acid, preferentially leucine, but not glutamic or aspartic acids.. Presumably involved in the processing and regular turnover of intracellular proteins. Catalyzes the removal of unsubstituted N-terminal amino acids from various peptides. This is Probable cytosol aminopeptidase from Stenotrophomonas maltophilia (strain K279a).